Reading from the N-terminus, the 72-residue chain is Translation initiation factor IF-1 (72 aa).

In terms of domain architecture, S1-like spans 1-72; it reads MTKEDNIEMQ…TKGRIIFRSR (72 aa).

This sequence belongs to the IF-1 family. As to quaternary structure, component of the 30S ribosomal translation pre-initiation complex which assembles on the 30S ribosome in the order IF-2 and IF-3, IF-1 and N-formylmethionyl-tRNA(fMet); mRNA recruitment can occur at any time during PIC assembly.

It localises to the cytoplasm. Its function is as follows. One of the essential components for the initiation of protein synthesis. Stabilizes the binding of IF-2 and IF-3 on the 30S subunit to which N-formylmethionyl-tRNA(fMet) subsequently binds. Helps modulate mRNA selection, yielding the 30S pre-initiation complex (PIC). Upon addition of the 50S ribosomal subunit IF-1, IF-2 and IF-3 are released leaving the mature 70S translation initiation complex. The polypeptide is Translation initiation factor IF-1 (Buchnera aphidicola subsp. Schizaphis graminum (strain Sg)).